Here is a 983-residue protein sequence, read N- to C-terminus: Nuclear factor NF-kappa-B p105 subunit (983 aa).

Positions 47 to 372 (PYLQIIEQPK…EVQRKRQKLM (326 aa)) constitute an RHD domain. Cysteine 66 carries the post-translational modification S-nitrosocysteine. Position 342 is a phosphoserine; by PKA (serine 342). The short motif at 365–370 (QRKRQK) is the Nuclear localization signal element. The interval 377–397 (DGYGGGSGAGGGGMFGGGGGG) is GRR. The interval 423–454 (KSNAGMKHELSNSTVKKDEESSDKQSDKWDTK) is disordered. Residues 428 to 454 (MKHELSNSTVKKDEESSDKQSDKWDTK) show a composition bias toward basic and acidic residues. 7 ANK repeats span residues 540–569 (NGDNVLHLSIIHLHRELVKNLLEVMPDMNY), 579–608 (LYQTPLHLAVITKQAEVVEDLLKAGANVNL), 612–641 (HGNSVLHLAAAEGDDKILSLLLKHQKASSM), 648–677 (EGLSAIHMVVTANSLSCLKLLIAAGVDVNA), 682–712 (SGRTALHLAVEQENVPLAGCLLLEGDADVDS), 716–745 (DGTTPLHIAAGRGFTKLAAVLKAAGADPHV), and 769–799 (PGTTPLDMAANWEVYDILNGKPYIAAAAVSE). The Death domain maps to 804–891 (QGPLRELNES…EAIEVIQKAL (88 aa)). Serine 938 carries the phosphoserine modification.

In terms of assembly, active NF-kappa-B is a heterodimer of an about 50 kDa DNA-binding subunit and the weak DNA-binding subunit p65. Two heterodimers might form a labile tetramer. Generation of the NF-kappa-B p50 (Nuclear factor NF-kappa-B p50 subunit) transcription factor takes place both cotranslationally and post-translationally via non-mutually exclusive mechanisms. A cotranslational processing allows the production of both p50 and p105 (Nuclear factor NF-kappa-B p105 subunit) from a single NFKB1 mRNA. While translation occurs, the particular unfolded structure after the GRR repeat region acts as a substrate for the proteasome, promoting degradation of the C-terminus. The GRR acts as a proteasomal 'stop signal', protecting the region upstream of the GRR from degradation and promoting generation of p50. It is unclear if limited proteasome degradation during cotranslational processing depends on ubiquitination. NF-kappa-B p50 is also generated post-translationally following ubiquitination by the KPC complex, leading to limited processing by the proteasome downstream of the GRR region, thereby generating p50. In terms of processing, phosphorylation at the C-terminus by IKBKB/IKKB acts as a signal for ubiquitination and promotes either complete degradation or processing to generate the NF-kappa-B p50 (Nuclear factor NF-kappa-B p50 subunit). Phosphorylation at Ser-938 are required for BTRC/BTRCP-mediated ubiquitination and proteolysis. Phosphorylation at Ser-938 is also required for ubiquitination by the KPC complex and limited processing to generate NF-kappa-B p50 (Nuclear factor NF-kappa-B p50 subunit). Post-translationally, polyubiquitinated at multiple Lys residues in the C-terminus. Polyubiquitinated by the SCF(FBXW11) and SCF(BTRC) complexes following phosphorylation at Ser-938, leading to its complete degradation. In contrast, polyubiquitination by the KPC complex following phosphorylation at Ser-938 leads to limited proteosomal processing and generation of the active NF-kappa-B p50 (Nuclear factor NF-kappa-B p50 subunit). S-nitrosylation of Cys-66 affects DNA binding. In terms of processing, the covalent modification of cysteine by 15-deoxy-Delta12,14-prostaglandin-J2 is autocatalytic and reversible. It may occur as an alternative to other cysteine modifications, such as S-nitrosylation and S-palmitoylation.

The protein resides in the cytoplasm. The protein localises to the nucleus. Functionally, P105 is the precursor of the active p50 subunit (Nuclear factor NF-kappa-B p50 subunit) of the nuclear factor NF-kappa-B. The precursor protein itself does not bind to DNA. Acts as a cytoplasmic retention of attached NF-kappa-B proteins by p105. Its function is as follows. Constitutes the active form, which associates with RELA/p65 to form the NF-kappa-B p65-p50 complex to form a transcription factor. Together with RELA/p65, binds to the kappa-B consensus sequence 5'-GGRNNYYCC-3', located in the enhancer region of genes involved in immune response and acute phase reactions. In Gallus gallus (Chicken), this protein is Nuclear factor NF-kappa-B p105 subunit (NFKB1).